The primary structure comprises 158 residues: Endoribonuclease YbeY (158 aa).

Positions 119, 123, and 129 each coordinate Zn(2+).

It belongs to the endoribonuclease YbeY family. It depends on Zn(2+) as a cofactor.

The protein resides in the cytoplasm. Its function is as follows. Single strand-specific metallo-endoribonuclease involved in late-stage 70S ribosome quality control and in maturation of the 3' terminus of the 16S rRNA. The sequence is that of Endoribonuclease YbeY from Acinetobacter baumannii (strain AB307-0294).